The following is a 400-amino-acid chain: Elongation factor Tu-B (400 aa).

Positions 10–209 (KPHVNVGTIG…VVDEYIPTPE (200 aa)) constitute a tr-type G domain. Residues 19-26 (GHVDHGKT) are G1. 19 to 26 (GHVDHGKT) contributes to the GTP binding site. T26 is a Mg(2+) binding site. The tract at residues 60-64 (GITIN) is G2. A G3 region spans residues 81 to 84 (DCPG). Residues 81–85 (DCPGH) and 136–139 (NKAD) each bind GTP. A G4 region spans residues 136–139 (NKAD). The segment at 174 to 176 (SAL) is G5.

Belongs to the TRAFAC class translation factor GTPase superfamily. Classic translation factor GTPase family. EF-Tu/EF-1A subfamily. As to quaternary structure, monomer.

It is found in the cytoplasm. It catalyses the reaction GTP + H2O = GDP + phosphate + H(+). Its function is as follows. GTP hydrolase that promotes the GTP-dependent binding of aminoacyl-tRNA to the A-site of ribosomes during protein biosynthesis. This is Elongation factor Tu-B from Caldanaerobacter subterraneus subsp. tengcongensis (strain DSM 15242 / JCM 11007 / NBRC 100824 / MB4) (Thermoanaerobacter tengcongensis).